The following is a 104-amino-acid chain: Inclusion membrane protein F (104 aa).

Transmembrane regions (helical) follow at residues 39–59 (LVVA…SLVA) and 70–90 (LAVL…VLFI).

It localises to the secreted. Its subcellular location is the host vacuole. The protein localises to the host pathogen-containing vacuole. The protein resides in the host pathogen-containing vacuole membrane. In terms of biological role, inclusion membrane protein probably involved in early modification events of the chlamydial inclusion. The protein is Inclusion membrane protein F of Chlamydia trachomatis serovar L2 (strain ATCC VR-902B / DSM 19102 / 434/Bu).